Here is a 372-residue protein sequence, read N- to C-terminus: UDP-N-acetylglucosamine--N-acetylmuramyl-(pentapeptide) pyrophosphoryl-undecaprenol N-acetylglucosamine transferase (372 aa).

UDP-N-acetyl-alpha-D-glucosamine-binding positions include Thr-14–Gly-16, Asn-128, Arg-169, Ser-201, Ile-257, and Gln-302.

Belongs to the glycosyltransferase 28 family. MurG subfamily.

It localises to the cell inner membrane. The enzyme catalyses di-trans,octa-cis-undecaprenyl diphospho-N-acetyl-alpha-D-muramoyl-L-alanyl-D-glutamyl-meso-2,6-diaminopimeloyl-D-alanyl-D-alanine + UDP-N-acetyl-alpha-D-glucosamine = di-trans,octa-cis-undecaprenyl diphospho-[N-acetyl-alpha-D-glucosaminyl-(1-&gt;4)]-N-acetyl-alpha-D-muramoyl-L-alanyl-D-glutamyl-meso-2,6-diaminopimeloyl-D-alanyl-D-alanine + UDP + H(+). It functions in the pathway cell wall biogenesis; peptidoglycan biosynthesis. In terms of biological role, cell wall formation. Catalyzes the transfer of a GlcNAc subunit on undecaprenyl-pyrophosphoryl-MurNAc-pentapeptide (lipid intermediate I) to form undecaprenyl-pyrophosphoryl-MurNAc-(pentapeptide)GlcNAc (lipid intermediate II). In Bacteroides thetaiotaomicron (strain ATCC 29148 / DSM 2079 / JCM 5827 / CCUG 10774 / NCTC 10582 / VPI-5482 / E50), this protein is UDP-N-acetylglucosamine--N-acetylmuramyl-(pentapeptide) pyrophosphoryl-undecaprenol N-acetylglucosamine transferase.